We begin with the raw amino-acid sequence, 227 residues long: PKHD-type hydroxylase Dtpsy_0528 (227 aa).

A Fe2OG dioxygenase domain is found at 78–178; that stretch reads TIYPPKFNRY…RVASFFWIES (101 aa). The Fe cation site is built by histidine 96, aspartate 98, and histidine 159. 2-oxoglutarate is bound at residue arginine 169.

It depends on Fe(2+) as a cofactor. L-ascorbate serves as cofactor.

The protein is PKHD-type hydroxylase Dtpsy_0528 of Acidovorax ebreus (strain TPSY) (Diaphorobacter sp. (strain TPSY)).